A 203-amino-acid chain; its full sequence is Probable cytochrome c oxidase subunit 3 (203 aa).

The next 5 membrane-spanning stretches (helical) occupy residues 30 to 50 (IVWL…YFSA), 71 to 91 (VPVT…VFAA), 96 to 116 (IFGL…FVLG), 143 to 163 (ATGF…FLLV), and 179 to 199 (IVVS…FTVI).

It belongs to the cytochrome c oxidase subunit 3 family.

It is found in the cell membrane. The catalysed reaction is 4 Fe(II)-[cytochrome c] + O2 + 8 H(+)(in) = 4 Fe(III)-[cytochrome c] + 2 H2O + 4 H(+)(out). This chain is Probable cytochrome c oxidase subunit 3 (ctaE), found in Mycobacterium bovis (strain ATCC BAA-935 / AF2122/97).